The sequence spans 54 residues: Large ribosomal subunit protein bL32c (54 aa).

This sequence belongs to the bacterial ribosomal protein bL32 family.

The protein resides in the plastid. The protein localises to the chloroplast. The polypeptide is Large ribosomal subunit protein bL32c (Cucumis sativus (Cucumber)).